The following is a 670-amino-acid chain: Probable urocanate hydratase (670 aa).

NAD(+) contacts are provided by residues 126–127, glutamine 204, 250–252, glutamate 270, 316–317, 338–342, 349–350, tyrosine 398, and glycine 590; these read GG, GMS, NV, QTSLH, and FY.

The protein belongs to the urocanase family. The cofactor is NAD(+).

The catalysed reaction is 4-imidazolone-5-propanoate = trans-urocanate + H2O. Its pathway is amino-acid degradation; L-histidine degradation into L-glutamate; N-formimidoyl-L-glutamate from L-histidine: step 2/3. This Caenorhabditis elegans protein is Probable urocanate hydratase.